The following is a 501-amino-acid chain: Glutamate--tRNA ligase (501 aa).

Residues proline 21–leucine 31 carry the 'HIGH' region motif. The 'KMSKS' region motif lies at lysine 266 to arginine 270. Position 269 (lysine 269) interacts with ATP.

This sequence belongs to the class-I aminoacyl-tRNA synthetase family. Glutamate--tRNA ligase type 1 subfamily. As to quaternary structure, monomer.

It localises to the cytoplasm. The catalysed reaction is tRNA(Glu) + L-glutamate + ATP = L-glutamyl-tRNA(Glu) + AMP + diphosphate. Catalyzes the attachment of glutamate to tRNA(Glu) in a two-step reaction: glutamate is first activated by ATP to form Glu-AMP and then transferred to the acceptor end of tRNA(Glu). In Kineococcus radiotolerans (strain ATCC BAA-149 / DSM 14245 / SRS30216), this protein is Glutamate--tRNA ligase.